The following is a 498-amino-acid chain: ATP synthase subunit beta, chloroplastic (498 aa).

An ATP-binding site is contributed by 172-179 (GGAGVGKT).

It belongs to the ATPase alpha/beta chains family. As to quaternary structure, F-type ATPases have 2 components, CF(1) - the catalytic core - and CF(0) - the membrane proton channel. CF(1) has five subunits: alpha(3), beta(3), gamma(1), delta(1), epsilon(1). CF(0) has four main subunits: a(1), b(1), b'(1) and c(9-12).

The protein localises to the plastid. The protein resides in the chloroplast thylakoid membrane. It catalyses the reaction ATP + H2O + 4 H(+)(in) = ADP + phosphate + 5 H(+)(out). Functionally, produces ATP from ADP in the presence of a proton gradient across the membrane. The catalytic sites are hosted primarily by the beta subunits. This is ATP synthase subunit beta, chloroplastic from Schisandra sphenanthera (Southern magnolia vine).